The following is a 109-amino-acid chain: MVRRSGVTLLVVALLVVTLMSSVSAQLNFSPGWGKRAAGASGSNGGVGEAVSGLHPSVGGAPGGVVPPGSSSPGDSCGPIPVSAVMHIYRLIRSEAVRLVQCQDEEYLG.

Residues 1–25 form the signal peptide; that stretch reads MVRRSGVTLLVVALLVVTLMSSVSA. A Pyrrolidone carboxylic acid modification is found at Gln-26. Residue Trp-33 is modified to Tryptophan amide. The disordered stretch occupies residues 34-78; the sequence is GKRAAGASGSNGGVGEAVSGLHPSVGGAPGGVVPPGSSSPGDSCG. Low complexity-rich tracts occupy residues 49–59 and 67–78; these read EAVSGLHPSVG and PPGSSSPGDSCG.

The protein belongs to the AKH/HRTH/RPCH family.

It localises to the secreted. Its function is as follows. This hormone adapts the animal to light backgrounds by stimulating concentration of the pigment of its red body-chromatophores. This Callinectes sapidus (Blue crab) protein is Red pigment-concentrating prohormone.